Here is a 386-residue protein sequence, read N- to C-terminus: LL-diaminopimelate aminotransferase (386 aa).

Positions 13 and 38 each coordinate substrate. Pyridoxal 5'-phosphate contacts are provided by residues tyrosine 67, 101–102 (SK), tyrosine 126, asparagine 176, tyrosine 207, and 235–237 (SLS). Substrate-binding residues include lysine 102, tyrosine 126, and asparagine 176. An N6-(pyridoxal phosphate)lysine modification is found at lysine 238. Arginine 246 is a pyridoxal 5'-phosphate binding site. Arginine 364 serves as a coordination point for substrate.

Belongs to the class-I pyridoxal-phosphate-dependent aminotransferase family. LL-diaminopimelate aminotransferase subfamily. In terms of assembly, homodimer. Pyridoxal 5'-phosphate serves as cofactor.

The enzyme catalyses (2S,6S)-2,6-diaminopimelate + 2-oxoglutarate = (S)-2,3,4,5-tetrahydrodipicolinate + L-glutamate + H2O + H(+). Its pathway is amino-acid biosynthesis; L-lysine biosynthesis via DAP pathway; LL-2,6-diaminopimelate from (S)-tetrahydrodipicolinate (aminotransferase route): step 1/1. In terms of biological role, involved in the synthesis of meso-diaminopimelate (m-DAP or DL-DAP), required for both lysine and peptidoglycan biosynthesis. Catalyzes the direct conversion of tetrahydrodipicolinate to LL-diaminopimelate. The protein is LL-diaminopimelate aminotransferase of Natranaerobius thermophilus (strain ATCC BAA-1301 / DSM 18059 / JW/NM-WN-LF).